Consider the following 655-residue polypeptide: Probable potassium transport system protein Kup (655 aa).

12 helical membrane passes run 19–39 (GLLISLGIIYGDIGTSPLYVM), 42–62 (IAGGNVISENLILGGLSCVFW), 102–122 (VWPAMIGGAAMLADGIITPPI), 132–152 (LIFNKDIPTIPIVLAIIVMLF), 161–181 (IVGKFFGPIMFIWFAMLATLG), 214–234 (SGFWLLGAVFLCTTGAEALYS), 246–266 (ISWIFVKLALLINYFGQGAWI), 282–302 (IMPEWFIVYGIIIATMAAIIA), 338–358 (LFIPSINLLLLAGCIFVVLWF), 370–390 (LAINITFLMTTILLAYYLLII), 395–415 (FIWVGLLILMYLIIEVSFLVA), and 420–440 (FFHGGYFTLISSGILAFIMII).

The protein belongs to the HAK/KUP transporter (TC 2.A.72) family.

Its subcellular location is the cell inner membrane. It catalyses the reaction K(+)(in) + H(+)(in) = K(+)(out) + H(+)(out). Its function is as follows. Transport of potassium into the cell. Likely operates as a K(+):H(+) symporter. The sequence is that of Probable potassium transport system protein Kup from Cytophaga hutchinsonii (strain ATCC 33406 / DSM 1761 / CIP 103989 / NBRC 15051 / NCIMB 9469 / D465).